We begin with the raw amino-acid sequence, 316 residues long: Cysteine synthase (316 aa).

Hydrogen sulfide-binding residues include N7 and R35. An N6-(pyridoxal phosphate)lysine modification is found at K42. Pyridoxal 5'-phosphate is bound by residues N72 and G177–S181. L268 lines the hydrogen sulfide pocket. Residue S272 participates in pyridoxal 5'-phosphate binding.

The protein belongs to the cysteine synthase/cystathionine beta-synthase family. As to quaternary structure, homodimer. It depends on pyridoxal 5'-phosphate as a cofactor.

The catalysed reaction is O-acetyl-L-serine + hydrogen sulfide = L-cysteine + acetate. The protein operates within amino-acid biosynthesis; L-cysteine biosynthesis; L-cysteine from L-serine: step 2/2. This chain is Cysteine synthase (cysK), found in Haemophilus influenzae (strain ATCC 51907 / DSM 11121 / KW20 / Rd).